Here is a 352-residue protein sequence, read N- to C-terminus: Aliphatic aldoxime dehydratase (352 aa).

Residue serine 219 participates in an aliphatic aldoxime binding. Residue histidine 299 coordinates heme b. Residue histidine 320 participates in an aliphatic aldoxime binding. Residue histidine 320 is part of the active site.

Belongs to the heme-containing dehydratase family. As to quaternary structure, homodimer. The cofactor is heme b. It depends on Ca(2+) as a cofactor.

It catalyses the reaction an aliphatic aldoxime = a nitrile + H2O. Its activity is regulated as follows. Active when the heme iron is in the ferrous state. Is very sensitive to AgNO(3), is also inhibited by hydroxylamine and phenylhydrazine, and hardly inhibited by thiol reagents. Not sensitive to chelating agents and serine-modifying reagents. Its function is as follows. Catalyzes the dehydration of aldoximes to their corresponding nitrile. Aliphatic aldoximes are more effective substrates than aromatic aldoximes. Shows high activity with butyraldoxime and acetaldoxime, but only weak activity with the aromatic aldoxime pyridine-2-aldoxime. Cannot use benzaldoxime, isonitrosoacetophenone and pyridine-4-aldoxime. Is involved in the metabolism of aldoxime in vivo. The protein is Aliphatic aldoxime dehydratase of Pseudomonas chlororaphis (Pseudomonas aureofaciens).